A 563-amino-acid polypeptide reads, in one-letter code: Mitochondrial distribution and morphology protein 34 (563 aa).

In terms of domain architecture, SMP-LTD spans methionine 1 to leucine 195. 2 disordered regions span residues glutamate 298 to threonine 460 and arginine 535 to leucine 563. Composition is skewed to polar residues over residues alanine 303–arginine 332 and serine 346–leucine 357. Positions serine 365–serine 383 are enriched in basic residues. Polar residues-rich tracts occupy residues threonine 386 to alanine 402 and proline 444 to threonine 460.

The protein belongs to the MDM34 family. Component of the ER-mitochondria encounter structure (ERMES) or MDM complex, composed of mmm1, mdm10, mdm12 and mdm34.

The protein localises to the mitochondrion outer membrane. Its function is as follows. Component of the ERMES/MDM complex, which serves as a molecular tether to connect the endoplasmic reticulum (ER) and mitochondria. Components of this complex are involved in the control of mitochondrial shape and protein biogenesis, and function in nonvesicular lipid trafficking between the ER and mitochondria. Mdm34 is required for the interaction of the ER-resident membrane protein mmm1 and the outer mitochondrial membrane-resident beta-barrel protein mdm10. This is Mitochondrial distribution and morphology protein 34 from Sclerotinia sclerotiorum (strain ATCC 18683 / 1980 / Ss-1) (White mold).